We begin with the raw amino-acid sequence, 317 residues long: Protease HtpX homolog (317 aa).

The next 2 helical transmembrane spans lie at L14–I34 and I41–F61. H146 is a Zn(2+) binding site. E147 is a catalytic residue. H150 lines the Zn(2+) pocket. Transmembrane regions (helical) follow at residues M158–F178 and I189–A209. A Zn(2+)-binding site is contributed by E215.

The protein belongs to the peptidase M48B family. The cofactor is Zn(2+).

It is found in the cell membrane. In Thermoplasma acidophilum (strain ATCC 25905 / DSM 1728 / JCM 9062 / NBRC 15155 / AMRC-C165), this protein is Protease HtpX homolog.